A 439-amino-acid polypeptide reads, in one-letter code: Probable serine/threonine-protein kinase WNK6 (439 aa).

The disordered stretch occupies residues 1 to 30; it reads MMPPKPAAEDVADEQPEPPDEDPDVAEADP. Over residues 10-27 the composition is skewed to acidic residues; sequence DVADEQPEPPDEDPDVAE. Residues 35 to 293 enclose the Protein kinase domain; the sequence is LRYREIIGSG…ASELLKSPFL (259 aa). ATP is bound by residues 116 to 119 and lysine 166; that span reads TELF. Aspartate 183 serves as the catalytic Proton acceptor.

It belongs to the protein kinase superfamily. Ser/Thr protein kinase family. WNK subfamily.

It carries out the reaction L-seryl-[protein] + ATP = O-phospho-L-seryl-[protein] + ADP + H(+). The enzyme catalyses L-threonyl-[protein] + ATP = O-phospho-L-threonyl-[protein] + ADP + H(+). This Oryza sativa subsp. japonica (Rice) protein is Probable serine/threonine-protein kinase WNK6 (WNK6).